We begin with the raw amino-acid sequence, 515 residues long: Protein pid-4 (515 aa).

Residues 496–515 are disordered; sequence DRSPQKFKFPASGSYMKPAN.

In terms of assembly, may interact with pid-2, app-1 and prmt-5.

It is found in the cytoplasm. The protein localises to the perinuclear region. The protein resides in the P-body. Its function is as follows. Together with pid-5, it is involved in gene silencing mediated by a class of 21 nucleotide PIWI-interacting RNAs (piRNAs) that possess a uracil residue at the 5'-end (also called 21U-RNAs) and guide the Piwi protein prg-1 to its DNA targets for silencing. Together with pid-5, it is required for the biogenesis of secondary and tertiary 22G-siRNAs. Specifically, promotes the production of 22G-siRNAs from the 5' end of target mRNAs. Together with pid-5, plays a role in small RNA-directed transgenerational epigenetic inheritance (also called RNAe) over several generations and germline immortality. Together with pid-5, plays a role in the formation of liquid-like condensates in the cytoplasm called Z granules. The polypeptide is Protein pid-4 (Caenorhabditis elegans).